The chain runs to 396 residues: Elongation factor Tu (396 aa).

Residues 11–205 form the tr-type G domain; the sequence is KPHVNIGTIG…IVDEYIPTPE (195 aa). Residues 20 to 27 are G1; the sequence is GHVDHGKT. Residue 20–27 coordinates GTP; the sequence is GHVDHGKT. Thr-27 contributes to the Mg(2+) binding site. The G2 stretch occupies residues 61–65; it reads GITIN. The G3 stretch occupies residues 82–85; sequence DAPG. GTP-binding positions include 82–86 and 137–140; these read DAPGH and NKCD. A G4 region spans residues 137 to 140; the sequence is NKCD. The G5 stretch occupies residues 175–177; that stretch reads SAL.

This sequence belongs to the TRAFAC class translation factor GTPase superfamily. Classic translation factor GTPase family. EF-Tu/EF-1A subfamily. Monomer.

The protein resides in the cytoplasm. It carries out the reaction GTP + H2O = GDP + phosphate + H(+). Its function is as follows. GTP hydrolase that promotes the GTP-dependent binding of aminoacyl-tRNA to the A-site of ribosomes during protein biosynthesis. This is Elongation factor Tu from Lactobacillus acidophilus (strain ATCC 700396 / NCK56 / N2 / NCFM).